Reading from the N-terminus, the 904-residue chain is DNA mismatch repair protein MutS (904 aa).

655-662 (GPNMGGKS) contacts ATP.

The protein belongs to the DNA mismatch repair MutS family.

Its function is as follows. This protein is involved in the repair of mismatches in DNA. It is possible that it carries out the mismatch recognition step. This protein has a weak ATPase activity. The polypeptide is DNA mismatch repair protein MutS (Agrobacterium fabrum (strain C58 / ATCC 33970) (Agrobacterium tumefaciens (strain C58))).